The sequence spans 220 residues: Putative NAD(P)H nitroreductase SERP2086 (220 aa).

The protein belongs to the nitroreductase family. Requires FMN as cofactor.

This Staphylococcus epidermidis (strain ATCC 35984 / DSM 28319 / BCRC 17069 / CCUG 31568 / BM 3577 / RP62A) protein is Putative NAD(P)H nitroreductase SERP2086.